The following is a 330-amino-acid chain: Aspartate--ammonia ligase (330 aa).

This sequence belongs to the class-II aminoacyl-tRNA synthetase family. AsnA subfamily.

The protein resides in the cytoplasm. The catalysed reaction is L-aspartate + NH4(+) + ATP = L-asparagine + AMP + diphosphate + H(+). It functions in the pathway amino-acid biosynthesis; L-asparagine biosynthesis; L-asparagine from L-aspartate (ammonia route): step 1/1. The polypeptide is Aspartate--ammonia ligase (Haemophilus influenzae (strain PittGG)).